A 208-amino-acid chain; its full sequence is N-(5'-phosphoribosyl)anthranilate isomerase (208 aa).

The protein belongs to the TrpF family.

The enzyme catalyses N-(5-phospho-beta-D-ribosyl)anthranilate = 1-(2-carboxyphenylamino)-1-deoxy-D-ribulose 5-phosphate. It functions in the pathway amino-acid biosynthesis; L-tryptophan biosynthesis; L-tryptophan from chorismate: step 3/5. This chain is N-(5'-phosphoribosyl)anthranilate isomerase, found in Methanococcus vannielii (strain ATCC 35089 / DSM 1224 / JCM 13029 / OCM 148 / SB).